A 357-amino-acid polypeptide reads, in one-letter code: N-acetyl-gamma-glutamyl-phosphate reductase (357 aa).

Residue C160 is part of the active site.

The protein belongs to the NAGSA dehydrogenase family. Type 1 subfamily.

Its subcellular location is the cytoplasm. The enzyme catalyses N-acetyl-L-glutamate 5-semialdehyde + phosphate + NADP(+) = N-acetyl-L-glutamyl 5-phosphate + NADPH + H(+). Its pathway is amino-acid biosynthesis; L-arginine biosynthesis; N(2)-acetyl-L-ornithine from L-glutamate: step 3/4. In terms of biological role, catalyzes the NADPH-dependent reduction of N-acetyl-5-glutamyl phosphate to yield N-acetyl-L-glutamate 5-semialdehyde. The polypeptide is N-acetyl-gamma-glutamyl-phosphate reductase (Synechococcus sp. (strain CC9605)).